A 186-amino-acid chain; its full sequence is Protein FAM219A (186 aa).

Disordered stretches follow at residues 1 to 47 (MMEE…NYKP) and 59 to 132 (ELAR…GYSS). Over residues 67–81 (KNGTVGSPVNQQPKK) the composition is skewed to polar residues. The segment covering 123 to 132 (SRYSSSGYSS) has biased composition (low complexity).

It belongs to the FAM219 family.

The sequence is that of Protein FAM219A (fam219a) from Danio rerio (Zebrafish).